Reading from the N-terminus, the 353-residue chain is O-antigen biosynthesis glycosyltransferase WclY (353 aa).

Residues 116-136 (SLIGGLLWCSIWLFFDKLVIL) traverse the membrane as a helical segment. N190 and E271 together coordinate UDP. An E(x7)E motif is present at residues 263 to 271 (EGFGLTVLE).

It belongs to the glycosyltransferase group 1 family. Glycosyltransferase 4 subfamily.

Its subcellular location is the membrane. The protein operates within bacterial outer membrane biogenesis; LPS O-antigen biosynthesis. Activated by 5mM MnCl(2) and MgCl(2). No significant effect on activity by 5 mM ethylenediaminetetraacetic acid (EDTA), 0.125-0.5% Triton X-100 or dithiothreitol (DTT). Inhibited by 5 mM Zn-acetate. Involved in the assembly of the O-repeating unit during O-antigen biosynthesis. Glucosyltransferase accountable for the alpha-D-Glc-1,4-beta-D-Gal linkage within the O-antigen. Transfers alpha-1,4-Glc to the Gal moiety of a specific Gal-beta1-3GalNAc-alpha-OPO3-PO3-phenoxyundecyl (Gal-beta1-3GalNAc-PP-PhU) synthetic natural acceptor substrate analog. Requires both Gal-beta1-3GalNAc-alpha and the diphosphate moiety in the acceptor. Not active with GalNAc-PP-PhU, GlcNAc-PP-PhU, Gal-beta1-3GalNAc-alpha-O-benzyl, D-Rha-alpha1-3GlcNAc-alpha-PP-PhU or D-Man-alpha1-3Man-alpha-5-benzamidopentyl (BAP), nor with glycopeptides TTTVTP (Gal-beta1-3GalNAc-alpha-)TPTG or TT (Gal-beta1-3GalNAc-alpha-)TVTPTPTG as acceptor substrates. Has a broad nucleotide sugar donor substrate specificity with ADP-Glc, TDP-Glc and UDP-Glc as superior donors. Gal, GlcNAc, and GalNAc residues are transferred from UDP-sugars, but with low activity. UDP-Xyl, UDP-GlcA, GDP-Fuc or GDP-K-Rha do not act as donors. This Escherichia coli protein is O-antigen biosynthesis glycosyltransferase WclY.